The following is a 398-amino-acid chain: Pentalenolactone synthase (398 aa).

Heme is bound at residue C347.

This sequence belongs to the cytochrome P450 family. Heme serves as cofactor.

The catalysed reaction is pentalenolactone F + 2 reduced [2Fe-2S]-[ferredoxin] + O2 + 2 H(+) = pentalenolactone + 2 oxidized [2Fe-2S]-[ferredoxin] + 2 H2O. It functions in the pathway antibiotic biosynthesis; pentalenolactone biosynthesis. Catalyzes the final step in the biosynthesis of the sesquiterpenoid antibiotic pentalenolactone by mediating the oxidative rearrangement of pentalenolactone F to pentalenolactone. The protein is Pentalenolactone synthase (penM) of Streptomyces exfoliatus (Streptomyces hydrogenans).